A 308-amino-acid chain; its full sequence is D-alanine--D-alanine ligase (308 aa).

One can recognise an ATP-grasp domain in the interval Lys-106 to Glu-305. Residue Val-136 to Thr-191 coordinates ATP. Positions 259, 272, and 274 each coordinate Mg(2+).

The protein belongs to the D-alanine--D-alanine ligase family. Requires Mg(2+) as cofactor. Mn(2+) is required as a cofactor.

Its subcellular location is the cytoplasm. It catalyses the reaction 2 D-alanine + ATP = D-alanyl-D-alanine + ADP + phosphate + H(+). Its pathway is cell wall biogenesis; peptidoglycan biosynthesis. Functionally, cell wall formation. The sequence is that of D-alanine--D-alanine ligase from Histophilus somni (strain 2336) (Haemophilus somnus).